An 87-amino-acid chain; its full sequence is HssA/B-like protein 58 (87 aa).

Positions 1 to 13 (MTILSAITSISRP) are enriched in polar residues. The tract at residues 1-31 (MTILSAITSISRPNKSSKSVISSNGGSSLSM) is disordered. Over residues 14 to 31 (NKSSKSVISSNGGSSLSM) the composition is skewed to low complexity.

Belongs to the hssA/B family.

This is HssA/B-like protein 58 (hssl58) from Dictyostelium discoideum (Social amoeba).